Consider the following 260-residue polypeptide: Flavin-dependent thymidylate synthase (260 aa).

Positions 2 to 203 (ISVKLVSYTN…PRLFKYTGPN (202 aa)) constitute a ThyX domain. Residues Ser-56, 80 to 82 (RHR), and Gln-88 each bind FAD. Residues 77-80 (QLVR), 88-92 (QMSHR), and Arg-142 contribute to the dUMP site. The short motif at 80–90 (RHRIASYTQMS) is the ThyX motif element. Residues 158 to 160 (NAR) and Asn-164 each bind FAD. Arg-169 contributes to the dUMP binding site. Arg-169 (involved in ionization of N3 of dUMP, leading to its activation) is an active-site residue.

It belongs to the thymidylate synthase ThyX family. In terms of assembly, homotetramer. The cofactor is FAD.

It catalyses the reaction dUMP + (6R)-5,10-methylene-5,6,7,8-tetrahydrofolate + NADPH + H(+) = dTMP + (6S)-5,6,7,8-tetrahydrofolate + NADP(+). Its pathway is pyrimidine metabolism; dTTP biosynthesis. In terms of biological role, catalyzes the reductive methylation of 2'-deoxyuridine-5'-monophosphate (dUMP) to 2'-deoxythymidine-5'-monophosphate (dTMP) while utilizing 5,10-methylenetetrahydrofolate (mTHF) as the methyl donor, and NADPH and FADH(2) as the reductant. This Saccharolobus solfataricus (strain ATCC 35092 / DSM 1617 / JCM 11322 / P2) (Sulfolobus solfataricus) protein is Flavin-dependent thymidylate synthase.